Consider the following 335-residue polypeptide: 2-acylglycerol O-acyltransferase 2 (335 aa).

A run of 2 helical transmembrane segments spans residues 24 to 44 (WAVS…LLLF) and 104 to 124 (YIMG…NFCT). An N-linked (GlcNAc...) asparagine glycan is attached at Asn206.

Belongs to the diacylglycerol acyltransferase family.

It is found in the endoplasmic reticulum membrane. It localises to the cytoplasm. Its subcellular location is the perinuclear region. The catalysed reaction is a 2-acylglycerol + an acyl-CoA = a 1,2-diacylglycerol + CoA. The enzyme catalyses a 2-acylglycerol + an acyl-CoA = a 1,2-diacyl-sn-glycerol + CoA. It carries out the reaction a 2-acylglycerol + an acyl-CoA = a 2,3-diacyl-sn-glycerol + CoA. It catalyses the reaction a 1-acylglycerol + an acyl-CoA = a 1,2-diacylglycerol + CoA. The catalysed reaction is a 1-acylglycerol + an acyl-CoA = a 1,3-diacylglycerol + CoA. The enzyme catalyses 1-O-alkylglycerol + an acyl-CoA = 1-O-alkyl-3-acylglycerol + CoA. It carries out the reaction an acyl-CoA + a 1,2-diacyl-sn-glycerol = a triacyl-sn-glycerol + CoA. It functions in the pathway glycerolipid metabolism; triacylglycerol biosynthesis. Its function is as follows. Involved in glycerolipid synthesis and lipid metabolism. Catalyzes the formation of diacylglycerol, the precursor of triacylglycerol, by transferring the acyl chain of a fatty acyl-CoA to a monoacylglycerol. Plays a central role in absorption of dietary fat in the small intestine by catalyzing the resynthesis of triacylglycerol in enterocytes. Has a preference toward monoacylglycerols containing unsaturated fatty acids in an order of C18:3 &gt; C18:2 &gt; C18:1 &gt; C18:0 at sn-2. Able to use 1-monoalkylglycerol (1-MAkG, 1-O-alkylglycerol) as an acyl acceptor for the synthesis of monoalkyl-monoacylglycerol (MAMAG, 1-O-alkyl-3-acylglycerol or 1-O-alkyl-2-acylglycerol) and subsequently, with lower efficiency, may add another acyl chain producing monoalkyl-diacylglycerol (MADAG, 1-O-alkyl-2,3-diacylglycerol). Possesses weak but significant activity with diacylglycerol as substrate, producing triacylglycerol (triacyl-sn-glycerol). This chain is 2-acylglycerol O-acyltransferase 2 (mogat2), found in Xenopus tropicalis (Western clawed frog).